A 241-amino-acid polypeptide reads, in one-letter code: Small ribosomal subunit protein uS2 (241 aa).

This sequence belongs to the universal ribosomal protein uS2 family.

The sequence is that of Small ribosomal subunit protein uS2 from Escherichia coli (strain 55989 / EAEC).